The following is a 366-amino-acid chain: Leucine-rich repeat-containing protein 58 (366 aa).

Ser-19 is subject to Phosphoserine. 9 LRR repeats span residues 40–61, 64–86, 87–108, 116–138, 139–161, 162–184, 185–206, 208–229, and 231–251; these read ALLRLLLPYNRLTSLPRALGGG, HLQLLDVSGNSLTALGPELLTLS, GLRTLLARNNRLGGPGSLPKGL, SLQVLNLSGNCFQELPASLLELR, ALQTLSLGGNQLQSIPAEIENLR, SLECLYLGGNFIKEIPPELANLP, SLNYLVLCDNKIQSVPPQLSQL, SLRSLSLHNNLLTYLPREILNL, and HLEELSLRGNPLVVRFVRDLT. The segment covering 337-346 has biased composition (low complexity); the sequence is ASHSSTSQSE. The interval 337–356 is disordered; it reads ASHSSTSQSESDSEDEASVA.

The protein is Leucine-rich repeat-containing protein 58 (Lrrc58) of Mus musculus (Mouse).